The chain runs to 218 residues: Adenylate kinase (218 aa).

11-16 (GAGKGT) provides a ligand contact to ATP. Residues 31–60 (STGDMFREAMANKTKVGLEAKSYIDKGNLV) form an NMP region. Residues T32, R37, 58-60 (NLV), 86-89 (GFPR), and Q93 contribute to the AMP site. Residues 127-165 (ARYMCKNCGATYNKISKQPKVEGTCDRCGSHEFYQREDD) form an LID region. R128 serves as a coordination point for ATP. Zn(2+) contacts are provided by C131 and C134. 137 to 138 (TY) is an ATP binding site. C151 and C154 together coordinate Zn(2+). AMP-binding residues include R162 and R173. Q201 is a binding site for ATP.

This sequence belongs to the adenylate kinase family. In terms of assembly, monomer.

It is found in the cytoplasm. It carries out the reaction AMP + ATP = 2 ADP. The protein operates within purine metabolism; AMP biosynthesis via salvage pathway; AMP from ADP: step 1/1. Catalyzes the reversible transfer of the terminal phosphate group between ATP and AMP. Plays an important role in cellular energy homeostasis and in adenine nucleotide metabolism. The sequence is that of Adenylate kinase from Lactobacillus acidophilus (strain ATCC 700396 / NCK56 / N2 / NCFM).